The sequence spans 671 residues: Autophagy-related protein 22-2 (671 aa).

Polar residues-rich tracts occupy residues methionine 1–glutamine 10 and proline 19–phenylalanine 34. The segment at methionine 1 to glutamate 67 is disordered. 2 N-linked (GlcNAc...) asparagine glycosylation sites follow: asparagine 5 and asparagine 21. Residues glutamate 39–valine 60 are compositionally biased toward basic and acidic residues. 4 helical membrane passes run tyrosine 83–leucine 103, serine 155–isoleucine 175, leucine 188–proline 208, and leucine 212–leucine 232. The tract at residues proline 251–leucine 271 is disordered. A helical membrane pass occupies residues isoleucine 324 to leucine 344. A glycan (N-linked (GlcNAc...) asparagine) is linked at asparagine 346. 7 helical membrane-spanning segments follow: residues leucine 354 to leucine 374, phenylalanine 422 to valine 442, glycine 457 to isoleucine 477, alanine 491 to valine 511, tryptophan 523 to cysteine 543, tyrosine 560 to valine 582, and alanine 591 to valine 611. Residues glutamate 634–isoleucine 671 are disordered.

The protein belongs to the ATG22 family.

It localises to the vacuole membrane. Vacuolar effluxer which mediate the efflux of amino acids resulting from autophagic degradation. The release of autophagic amino acids allows the maintenance of protein synthesis and viability during nitrogen starvation. This is Autophagy-related protein 22-2 (atg22-2) from Sclerotinia sclerotiorum (strain ATCC 18683 / 1980 / Ss-1) (White mold).